A 431-amino-acid polypeptide reads, in one-letter code: Keratin, type I cytoskeletal 40 (431 aa).

Residues 1–89 form a head region; sequence MASEGSPDCC…CEEGTFNSNE (89 aa). One can recognise an IF rod domain in the interval 89–400; that stretch reads EKETMQFLND…GLLEKEDSRL (312 aa). Residues 90 to 124 are coil 1A; sequence KETMQFLNDRLASYLERVRSLEENNAELECRIREQ. A linker 1 region spans residues 125–135; sequence CEPDATPVCPD. A coil 1B region spans residues 136–236; the sequence is YQRYFDTIEE…HEEEVNLLRE (101 aa). The tract at residues 237 to 252 is linker 12; it reads QLGDRLNVELDTAPTV. Residues 253–396 form a coil 2 region; sequence DLNKVLDEMR…NTYRGLLEKE (144 aa). The tail stretch occupies residues 397 to 431; it reads DSRLPCNPGSTASISNSACEPCSAYVICTVENCCA.

This sequence belongs to the intermediate filament family. Heterotetramer of two type I and two type II keratins.

May play a role in late hair differentiation. In Rattus norvegicus (Rat), this protein is Keratin, type I cytoskeletal 40 (Krt40).